The following is a 390-amino-acid chain: Protein STRICTOSIDINE SYNTHASE-LIKE 3 (390 aa).

An N-terminal signal peptide occupies residues 1-25; it reads MAMSILAKIFLVFAIYCAIDPFSHS. N-linked (GlcNAc...) asparagine glycosylation is found at N95 and N108.

This sequence belongs to the strictosidine synthase family.

It localises to the vacuole. The sequence is that of Protein STRICTOSIDINE SYNTHASE-LIKE 3 from Arabidopsis thaliana (Mouse-ear cress).